The following is a 247-amino-acid chain: Carboxy-S-adenosyl-L-methionine synthase (247 aa).

S-adenosyl-L-methionine-binding positions include Y39, 64–66, 89–90, 117–118, N132, and R199; these read GCS, DN, and DI.

Belongs to the class I-like SAM-binding methyltransferase superfamily. Cx-SAM synthase family. Homodimer.

It carries out the reaction prephenate + S-adenosyl-L-methionine = carboxy-S-adenosyl-L-methionine + 3-phenylpyruvate + H2O. Functionally, catalyzes the conversion of S-adenosyl-L-methionine (SAM) to carboxy-S-adenosyl-L-methionine (Cx-SAM). This chain is Carboxy-S-adenosyl-L-methionine synthase, found in Escherichia coli O17:K52:H18 (strain UMN026 / ExPEC).